The following is a 194-amino-acid chain: MNNEEKKVNEEIVVEDQIEAIGTEADVEWNESMEESQDAKIAELEAALLASQAQLKEQQDAVLRAKAEEQNVRRRAEGDIDKARKYALKKFAGELLPVIDNLERALESGDKENEAAKVLLEGVELTLQTFISTIEKFGLTVINPVGETFNPEHHQAIGMQASPDHESNTVMVVMQKGYSLNEQVIRPAMVMVAQ.

It belongs to the GrpE family. Homodimer.

The protein localises to the cytoplasm. Its function is as follows. Participates actively in the response to hyperosmotic and heat shock by preventing the aggregation of stress-denatured proteins, in association with DnaK and GrpE. It is the nucleotide exchange factor for DnaK and may function as a thermosensor. Unfolded proteins bind initially to DnaJ; upon interaction with the DnaJ-bound protein, DnaK hydrolyzes its bound ATP, resulting in the formation of a stable complex. GrpE releases ADP from DnaK; ATP binding to DnaK triggers the release of the substrate protein, thus completing the reaction cycle. Several rounds of ATP-dependent interactions between DnaJ, DnaK and GrpE are required for fully efficient folding. This chain is Protein GrpE, found in Aliivibrio salmonicida (strain LFI1238) (Vibrio salmonicida (strain LFI1238)).